A 444-amino-acid chain; its full sequence is Docking protein 3 (444 aa).

Residues 7–123 (PVKDGLLYQQ…WMDPICQLAF (117 aa)) enclose the PH domain. Residues 47–66 (DVRDGGLGPGGDRPAGPGRR) are disordered. Phosphoserine is present on serine 138. An IRS-type PTB domain is found at 157 to 261 (EVAEFPVVVQ…ARQRERLPEL (105 aa)). 3 positions are modified to phosphoserine: serine 274, serine 308, and serine 314. Phosphotyrosine is present on tyrosine 325. The disordered stretch occupies residues 354 to 390 (GLSNGGPEAQEGPPGGRSPLGSPIYHNSEELSWPGSA). Low complexity predominate over residues 358–376 (GGPEAQEGPPGGRSPLGSP). Phosphoserine is present on serine 371.

The protein belongs to the DOK family. Type A subfamily. As to quaternary structure, on tyrosine phosphorylation, interacts with CSK and INPP5D/SHIP1 via their SH2 domains. Binds ABL1 through the PTB domain and in a kinase-dependent manner. Does not interact with RasGAP. In terms of processing, constitutively tyrosine-phosphorylated. Post-translationally, on IL2 stimulation, phosphorylated on C-terminal tyrosine residues possibly by Src kinases. Can also be phosphorylated by ABL1 kinase.

Its subcellular location is the cytoplasm. It is found in the cell membrane. In terms of biological role, DOK proteins are enzymatically inert adaptor or scaffolding proteins. They provide a docking platform for the assembly of multimolecular signaling complexes. DOK3 is a negative regulator of JNK signaling in B-cells through interaction with INPP5D/SHIP1. May modulate ABL1 function. The sequence is that of Docking protein 3 (Dok3) from Rattus norvegicus (Rat).